The chain runs to 574 residues: Serine/threonine-protein kinase fray1 (574 aa).

The span at 24-41 shows a compositional bias: basic and acidic residues; it reads NHHDLPDSDSDSSSREEE. A disordered region spans residues 24-64; sequence NHHDLPDSDSDSSSREEELMNSSGGGNGKEPIGEKKKLPSH. One can recognise a Protein kinase domain in the interval 97–357; it reads YNLIEPIGEG…ASKLLEHKVF (261 aa). ATP-binding positions include 103-111 and lysine 126; that span reads IGEGTEGRV. Aspartate 221 acts as the Proton acceptor in catalysis. Threonine 256 bears the Phosphothreonine; by autocatalysis mark. 3 disordered regions span residues 381 to 447, 462 to 514, and 532 to 554; these read YRES…LVNM, LSSG…PEKE, and FGSPKEGDHNHQHHKSEGDHEHH. Composition is skewed to low complexity over residues 386–403, 418–441, and 462–475; these read SPASSNTPSPDSSRPSSP, KNIKPSSLNKSSSSLELKNKNLSN, and LSSGSGPLSQSSDL. A compositionally biased stretch (basic residues) spans 478-491; it reads GHLHKIGTPKKKHS. The segment covering 492 to 506 has biased composition (low complexity); it reads PSGSIGDSHGSISPP. Residues 536 to 553 are compositionally biased toward basic and acidic residues; sequence KEGDHNHQHHKSEGDHEH.

It belongs to the protein kinase superfamily. STE Ser/Thr protein kinase family. STE20 subfamily. Mn(2+) is required as a cofactor. In terms of processing, undergoes autophosphorylation in the catalytic domain.

The catalysed reaction is L-seryl-[protein] + ATP = O-phospho-L-seryl-[protein] + ADP + H(+). It carries out the reaction L-threonyl-[protein] + ATP = O-phospho-L-threonyl-[protein] + ADP + H(+). The sequence is that of Serine/threonine-protein kinase fray1 from Dictyostelium discoideum (Social amoeba).